Here is a 270-residue protein sequence, read N- to C-terminus: Bis(5'-nucleosyl)-tetraphosphatase, symmetrical (270 aa).

The protein belongs to the Ap4A hydrolase family.

The enzyme catalyses P(1),P(4)-bis(5'-adenosyl) tetraphosphate + H2O = 2 ADP + 2 H(+). Hydrolyzes diadenosine 5',5'''-P1,P4-tetraphosphate to yield ADP. The polypeptide is Bis(5'-nucleosyl)-tetraphosphatase, symmetrical (Haemophilus ducreyi (strain 35000HP / ATCC 700724)).